We begin with the raw amino-acid sequence, 90 residues long: UPF0367 protein Ava_2513 (90 aa).

This sequence belongs to the UPF0367 family.

The protein is UPF0367 protein Ava_2513 of Trichormus variabilis (strain ATCC 29413 / PCC 7937) (Anabaena variabilis).